A 388-amino-acid polypeptide reads, in one-letter code: Branched-chain-amino-acid aminotransferase 2, chloroplastic (388 aa).

The N-terminal 22 residues, 1–22 (MIKTITSLRKTLVLPLHLHIRT), are a transit peptide targeting the chloroplast. At K235 the chain carries N6-(pyridoxal phosphate)lysine.

It belongs to the class-IV pyridoxal-phosphate-dependent aminotransferase family. Requires pyridoxal 5'-phosphate as cofactor.

Its subcellular location is the plastid. It localises to the chloroplast. It carries out the reaction L-leucine + 2-oxoglutarate = 4-methyl-2-oxopentanoate + L-glutamate. The enzyme catalyses L-isoleucine + 2-oxoglutarate = (S)-3-methyl-2-oxopentanoate + L-glutamate. It catalyses the reaction L-valine + 2-oxoglutarate = 3-methyl-2-oxobutanoate + L-glutamate. The protein operates within amino-acid biosynthesis; L-isoleucine biosynthesis; L-isoleucine from 2-oxobutanoate: step 4/4. Its pathway is amino-acid biosynthesis; L-leucine biosynthesis; L-leucine from 3-methyl-2-oxobutanoate: step 4/4. It participates in amino-acid biosynthesis; L-valine biosynthesis; L-valine from pyruvate: step 4/4. Converts 2-oxo acids to branched-chain amino acids. Shows activity with L-Leu, L-Ile and L-Val as amino donors and 2-oxoglutarate as an amino acceptor, but no activity for D-isomers of Leu, Ile, Val, Asp, Glu or Ala. This is Branched-chain-amino-acid aminotransferase 2, chloroplastic (BCAT2) from Arabidopsis thaliana (Mouse-ear cress).